Here is a 144-residue protein sequence, read N- to C-terminus: Mercuric transport protein MerC (144 aa).

The Cytoplasmic segment spans residues 1-21; the sequence is MSAITRIIDKIGIVGTIVGSF. Residues 22 to 42 form a helical membrane-spanning segment; sequence SCAMCFPAAASLGAAIGLGFL. Hg(2+) is bound by residues Cys23 and Cys26. Residues 43–46 lie on the Periplasmic side of the membrane; the sequence is SQWE. Residues 47–67 traverse the membrane as a helical segment; it reads GLFVQWLIPIFASVALLATLA. At 68–78 the chain is on the cytoplasmic side; it reads GWFSHRQWQRT. The helical transmembrane segment at 79–99 threads the bilayer; it reads LLGSIGPVLALVGVFGLTHHF. The Periplasmic segment spans residues 100–103; the sequence is LDKD. The chain crosses the membrane as a helical span at residues 104–124; sequence LARVIFYTGLVVMFLVSIWDM. The Cytoplasmic segment spans residues 125 to 144; the sequence is VNPANRRCATDGCETPAPRS.

Monomer.

Its subcellular location is the cell inner membrane. Its activity is regulated as follows. Inhibited by the thiol-modifying reagent N-ethylmaleimide (NEM). In terms of biological role, involved in mercuric ion uptake. This is Mercuric transport protein MerC from Acidithiobacillus ferrooxidans (Thiobacillus ferrooxidans).